A 347-amino-acid chain; its full sequence is Ferredoxin--NADP reductase 1 (347 aa).

The FAD site is built by Thr-26, Asp-45, Gln-53, Tyr-58, Val-98, Phe-133, Asp-298, and Ser-339.

Belongs to the ferredoxin--NADP reductase type 2 family. Homodimer. It depends on FAD as a cofactor.

It carries out the reaction 2 reduced [2Fe-2S]-[ferredoxin] + NADP(+) + H(+) = 2 oxidized [2Fe-2S]-[ferredoxin] + NADPH. The polypeptide is Ferredoxin--NADP reductase 1 (Chloroherpeton thalassium (strain ATCC 35110 / GB-78)).